The chain runs to 435 residues: MAAQVADGVADLKLDDTKSKPTNGTTQNGDAEHEDSDDDNEGEEGAAEGGEGAAKKKKKRKPRKKKKAGAAGASGPKTQTKPPRVPVHEIFLNDSYPEGEIHEYLNENSYRTTSEEKRHLDRMNNDFLTDYRRGAEIHRTVRQWARDWIKPGMSLTEIAEGIEDSVRALTGHQGLEDGDAQIAGMGFPTGLSINHCAAHYTPNAGNKMVVNYEDVMKVDFGVHINGRIVDSAFTLTFDPVYDNLVEACKAATNAGIKEAGIDVRMSDIGAAIQEVMESYEVEIKGETFPVKCIRNLNGHSIGHYTIHGGKTVPIVKGGDQTKMEEGETFAIETFGSTGKGYVRDDMETSHYAKRSDAPKVALRVSSAKTLLNSITKNFGTLPFCRRYLDRLGHDKYLLGLNNLVSAGIVEAYPPLCDIKGSYTAQSEHVSFFPSV.

Residues methionine 1–valine 87 form a disordered region. The span at alanine 10 to serine 19 shows a compositional bias: basic and acidic residues. Residues lysine 20 to glycine 29 are compositionally biased toward polar residues. Over residues glutamate 32–alanine 46 the composition is skewed to acidic residues. Over residues lysine 55–alanine 68 the composition is skewed to basic residues. Histidine 199 is a substrate binding site. Residues aspartate 219, aspartate 230, and histidine 299 each coordinate a divalent metal cation. A substrate-binding site is contributed by histidine 307. Residues glutamate 332 and glutamate 427 each coordinate a divalent metal cation.

The protein belongs to the peptidase M24A family. Methionine aminopeptidase eukaryotic type 2 subfamily. It depends on Co(2+) as a cofactor. Requires Zn(2+) as cofactor. The cofactor is Mn(2+). Fe(2+) serves as cofactor.

It is found in the cytoplasm. It carries out the reaction Release of N-terminal amino acids, preferentially methionine, from peptides and arylamides.. Its function is as follows. Cotranslationally removes the N-terminal methionine from nascent proteins. The N-terminal methionine is often cleaved when the second residue in the primary sequence is small and uncharged (Met-Ala-, Cys, Gly, Pro, Ser, Thr, or Val). The polypeptide is Methionine aminopeptidase 2 (Phaeosphaeria nodorum (strain SN15 / ATCC MYA-4574 / FGSC 10173) (Glume blotch fungus)).